A 259-amino-acid polypeptide reads, in one-letter code: Ribosomal RNA small subunit methyltransferase J (259 aa).

S-adenosyl-L-methionine contacts are provided by residues 107-108 (RD), 123-124 (ER), 159-160 (SS), and D177.

The protein belongs to the methyltransferase superfamily. RsmJ family.

It is found in the cytoplasm. The enzyme catalyses guanosine(1516) in 16S rRNA + S-adenosyl-L-methionine = N(2)-methylguanosine(1516) in 16S rRNA + S-adenosyl-L-homocysteine + H(+). Its function is as follows. Specifically methylates the guanosine in position 1516 of 16S rRNA. In Shewanella loihica (strain ATCC BAA-1088 / PV-4), this protein is Ribosomal RNA small subunit methyltransferase J.